We begin with the raw amino-acid sequence, 271 residues long: Small ribosomal subunit protein uS2 (271 aa).

Positions R223 to K271 are disordered. A compositionally biased stretch (acidic residues) spans M253–K271.

This sequence belongs to the universal ribosomal protein uS2 family.

This Wolinella succinogenes (strain ATCC 29543 / DSM 1740 / CCUG 13145 / JCM 31913 / LMG 7466 / NCTC 11488 / FDC 602W) (Vibrio succinogenes) protein is Small ribosomal subunit protein uS2.